Here is a 236-residue protein sequence, read N- to C-terminus: tRNA (guanine-N(7)-)-methyltransferase (236 aa).

Residues aspartate 35, glutamate 60, asparagine 87, and aspartate 113 each contribute to the S-adenosyl-L-methionine site. Aspartate 113 is a catalytic residue. 2 residues coordinate substrate: lysine 117 and aspartate 149. The interval 217 to 236 is disordered; the sequence is EFEQHWQEIDNPGNAPTPDA.

It belongs to the class I-like SAM-binding methyltransferase superfamily. TrmB family.

It catalyses the reaction guanosine(46) in tRNA + S-adenosyl-L-methionine = N(7)-methylguanosine(46) in tRNA + S-adenosyl-L-homocysteine. It functions in the pathway tRNA modification; N(7)-methylguanine-tRNA biosynthesis. Functionally, catalyzes the formation of N(7)-methylguanine at position 46 (m7G46) in tRNA. The chain is tRNA (guanine-N(7)-)-methyltransferase from Synechococcus sp. (strain CC9902).